Reading from the N-terminus, the 79-residue chain is Protein OPG081 (79 aa).

Topologically, residues Val-2–Leu-8 are intravirion. Residues Thr-9–Val-29 traverse the membrane as a helical segment. The Virion surface segment spans residues Lys-30–Arg-47. A helical membrane pass occupies residues Ala-48 to Tyr-68. The Intravirion portion of the chain corresponds to Ala-69–Ser-79.

Belongs to the orthopoxvirus OPG081 family.

It is found in the virion membrane. Envelope protein. The chain is Protein OPG081 (OPG081) from Vaccinia virus (strain Western Reserve) (VACV).